A 508-amino-acid chain; its full sequence is Photosystem II CP47 reaction center protein (508 aa).

The next 6 membrane-spanning stretches (helical) occupy residues 21–36 (AVHL…WAGS), 101–115 (ITLS…IWHW), 140–156 (GIHL…FGAF), 203–218 (IAAG…FHLS), 237–252 (VLSS…AFVV), and 457–472 (TFAL…HGAR).

This sequence belongs to the PsbB/PsbC family. PsbB subfamily. In terms of assembly, PSII is composed of 1 copy each of membrane proteins PsbA, PsbB, PsbC, PsbD, PsbE, PsbF, PsbH, PsbI, PsbJ, PsbK, PsbL, PsbM, PsbT, PsbX, PsbY, PsbZ, Psb30/Ycf12, at least 3 peripheral proteins of the oxygen-evolving complex and a large number of cofactors. It forms dimeric complexes. Requires Binds multiple chlorophylls. PSII binds additional chlorophylls, carotenoids and specific lipids. as cofactor.

It localises to the plastid. The protein resides in the chloroplast thylakoid membrane. Functionally, one of the components of the core complex of photosystem II (PSII). It binds chlorophyll and helps catalyze the primary light-induced photochemical processes of PSII. PSII is a light-driven water:plastoquinone oxidoreductase, using light energy to abstract electrons from H(2)O, generating O(2) and a proton gradient subsequently used for ATP formation. This is Photosystem II CP47 reaction center protein from Psilotum nudum (Whisk fern).